Reading from the N-terminus, the 289-residue chain is ATP synthase gamma chain (289 aa).

It belongs to the ATPase gamma chain family. As to quaternary structure, F-type ATPases have 2 components, CF(1) - the catalytic core - and CF(0) - the membrane proton channel. CF(1) has five subunits: alpha(3), beta(3), gamma(1), delta(1), epsilon(1). CF(0) has three main subunits: a, b and c.

Its subcellular location is the cell inner membrane. Functionally, produces ATP from ADP in the presence of a proton gradient across the membrane. The gamma chain is believed to be important in regulating ATPase activity and the flow of protons through the CF(0) complex. The sequence is that of ATP synthase gamma chain from Haemophilus influenzae (strain ATCC 51907 / DSM 11121 / KW20 / Rd).